Here is a 180-residue protein sequence, read N- to C-terminus: Dual-action ribosomal maturation protein DarP (180 aa).

A compositionally biased stretch (basic and acidic residues) spans 1–13 (MKPDKTENTEHGI). Positions 1–21 (MKPDKTENTEHGIEPVSKTKR) are disordered.

Belongs to the DarP family.

It localises to the cytoplasm. Member of a network of 50S ribosomal subunit biogenesis factors which assembles along the 30S-50S interface, preventing incorrect 23S rRNA structures from forming. Promotes peptidyl transferase center (PTC) maturation. The sequence is that of Dual-action ribosomal maturation protein DarP from Methylobacillus flagellatus (strain ATCC 51484 / DSM 6875 / VKM B-1610 / KT).